Consider the following 339-residue polypeptide: Phosphate acyltransferase (339 aa).

Belongs to the PlsX family. In terms of assembly, homodimer. Probably interacts with PlsY.

The protein resides in the cytoplasm. The catalysed reaction is a fatty acyl-[ACP] + phosphate = an acyl phosphate + holo-[ACP]. The protein operates within lipid metabolism; phospholipid metabolism. Functionally, catalyzes the reversible formation of acyl-phosphate (acyl-PO(4)) from acyl-[acyl-carrier-protein] (acyl-ACP). This enzyme utilizes acyl-ACP as fatty acyl donor, but not acyl-CoA. This chain is Phosphate acyltransferase, found in Brachyspira hyodysenteriae (strain ATCC 49526 / WA1).